The following is a 207-amino-acid chain: 3-isopropylmalate dehydratase small subunit (207 aa).

Belongs to the LeuD family. LeuD type 1 subfamily. In terms of assembly, heterodimer of LeuC and LeuD.

It carries out the reaction (2R,3S)-3-isopropylmalate = (2S)-2-isopropylmalate. Its pathway is amino-acid biosynthesis; L-leucine biosynthesis; L-leucine from 3-methyl-2-oxobutanoate: step 2/4. Catalyzes the isomerization between 2-isopropylmalate and 3-isopropylmalate, via the formation of 2-isopropylmaleate. This chain is 3-isopropylmalate dehydratase small subunit (leuD), found in Buchnera aphidicola subsp. Acyrthosiphon pisum (strain APS) (Acyrthosiphon pisum symbiotic bacterium).